The chain runs to 100 residues: NAD(P)H-quinone oxidoreductase subunit 4L, chloroplastic (100 aa).

Transmembrane regions (helical) follow at residues 2–22, 28–48, and 61–81; these read ILQH…FGLI, VKIL…LVIF, and LFGL…LAIL.

This sequence belongs to the complex I subunit 4L family. As to quaternary structure, NDH is composed of at least 16 different subunits, 5 of which are encoded in the nucleus.

The protein localises to the plastid. Its subcellular location is the chloroplast thylakoid membrane. The catalysed reaction is a plastoquinone + NADH + (n+1) H(+)(in) = a plastoquinol + NAD(+) + n H(+)(out). The enzyme catalyses a plastoquinone + NADPH + (n+1) H(+)(in) = a plastoquinol + NADP(+) + n H(+)(out). In terms of biological role, NDH shuttles electrons from NAD(P)H:plastoquinone, via FMN and iron-sulfur (Fe-S) centers, to quinones in the photosynthetic chain and possibly in a chloroplast respiratory chain. The immediate electron acceptor for the enzyme in this species is believed to be plastoquinone. Couples the redox reaction to proton translocation, and thus conserves the redox energy in a proton gradient. This chain is NAD(P)H-quinone oxidoreductase subunit 4L, chloroplastic, found in Chara vulgaris (Common stonewort).